A 121-amino-acid chain; its full sequence is MKKFALATIFALATTSAFAGFNGNNSQGGFQQAAPAAISVKQALSAADNSMITLVGNITQQIDDDEFWFTDGTGQIKIEIKKRVWNGLNVDSKDKVKIYGKLDNEVFEKAELDVLRIEKAE.

The signal sequence occupies residues 1–19; it reads MKKFALATIFALATTSAFA.

To E.coli YgiW.

The protein localises to the periplasm. This is an uncharacterized protein from Haemophilus influenzae (strain ATCC 51907 / DSM 11121 / KW20 / Rd).